A 373-amino-acid chain; its full sequence is DNA replication and repair protein RecF (373 aa).

Residue 30–37 coordinates ATP; sequence GENAQGKT.

Belongs to the RecF family.

It is found in the cytoplasm. The RecF protein is involved in DNA metabolism; it is required for DNA replication and normal SOS inducibility. RecF binds preferentially to single-stranded, linear DNA. It also seems to bind ATP. The sequence is that of DNA replication and repair protein RecF from Limosilactobacillus fermentum (strain NBRC 3956 / LMG 18251) (Lactobacillus fermentum).